We begin with the raw amino-acid sequence, 263 residues long: Small ribosomal subunit protein eS1 (263 aa).

The disordered stretch occupies residues 235 to 263 (HGEGGGGKGEAGDKSERPEGYEPPVQESV). The segment covering 244 to 254 (EAGDKSERPEG) has biased composition (basic and acidic residues).

The protein belongs to the eukaryotic ribosomal protein eS1 family. Component of the small ribosomal subunit. Mature ribosomes consist of a small (40S) and a large (60S) subunit. The 40S subunit contains about 33 different proteins and 1 molecule of RNA (18S). The 60S subunit contains about 49 different proteins and 3 molecules of RNA (28S, 5.8S and 5S).

The protein resides in the cytoplasm. This Bombyx mori (Silk moth) protein is Small ribosomal subunit protein eS1.